A 403-amino-acid chain; its full sequence is Phosphoglycerate kinase (403 aa).

Substrate is bound by residues 21–23, R36, 59–62, R118, and R151; these read DFN and HLGR. Residues K202, E328, and 354–357 each bind ATP; that span reads GGDS.

It belongs to the phosphoglycerate kinase family. In terms of assembly, monomer.

Its subcellular location is the cytoplasm. It carries out the reaction (2R)-3-phosphoglycerate + ATP = (2R)-3-phospho-glyceroyl phosphate + ADP. The protein operates within carbohydrate degradation; glycolysis; pyruvate from D-glyceraldehyde 3-phosphate: step 2/5. This Akkermansia muciniphila (strain ATCC BAA-835 / DSM 22959 / JCM 33894 / BCRC 81048 / CCUG 64013 / CIP 107961 / Muc) protein is Phosphoglycerate kinase.